The following is a 120-amino-acid chain: Large ribosomal subunit protein uL18 (120 aa).

The protein belongs to the universal ribosomal protein uL18 family. In terms of assembly, part of the 50S ribosomal subunit; part of the 5S rRNA/L5/L18/L25 subcomplex. Contacts the 5S and 23S rRNAs.

Functionally, this is one of the proteins that bind and probably mediate the attachment of the 5S RNA into the large ribosomal subunit, where it forms part of the central protuberance. The sequence is that of Large ribosomal subunit protein uL18 from Nitrobacter winogradskyi (strain ATCC 25391 / DSM 10237 / CIP 104748 / NCIMB 11846 / Nb-255).